We begin with the raw amino-acid sequence, 599 residues long: Protein ref(2)P (599 aa).

In terms of domain architecture, PB1 spans 3-88; sequence EKLLKITYQG…CESNMHVQVA (86 aa). The segment at 122–173 adopts a ZZ-type zinc-finger fold; it reads HDSVQCDGCGLAPLIGFRYKCVQCSNFDLCQKCESAHKHPEHLMLRMPTNNG. Zn(2+) is bound by residues Cys-127, Cys-130, Cys-142, Cys-145, Cys-151, Cys-154, His-160, and His-163. 4 disordered regions span residues 192–225, 245–319, 357–453, and 507–544; these read RRSR…HARR, TTAT…INLD, GIFA…LDPE, and ASAN…DDKR. The segment covering 199 to 211 has biased composition (low complexity); that stretch reads PFQEASQPAPAAE. A compositionally biased stretch (basic and acidic residues) spans 276-286; that stretch reads KATESEAKPTE. The segment covering 291-319 has biased composition (polar residues); it reads NTDQSVPTTEDPVTTPRSTEPTTPVINLD. The segment covering 375–411 has biased composition (low complexity); it reads QSQSSGQSAASSASQSAVPSAAPSANQSNVPSANQSA. 3 repeat units span residues 386–393, 399–406, and 407–413. Residues 386 to 413 are 3 X 8 AA repeats of S-A-N-Q-S-X-X-P; sequence SASQSAVPSAAPSANQSNVPSANQSATP. The segment covering 412–423 has biased composition (polar residues); the sequence is TPSISGSISDAQ. The segment covering 511–536 has biased composition (low complexity); sequence TQTAQVDTVSTSTSTTSVTTNSVGTS. Residues 550-595 form the UBA domain; it reads HTDERINQSIHAMMAMGFSNEGAWLTQLLESVQGNIPAALDVMHVS.

Interacts with aPKC and Traf6.

It is found in the nucleus. The protein localises to the cytoplasm. Required for selective autophagy activation by ubiquitinated proteins. Implicated in sigma rhabdovirus multiplication and necessary for male fertility. Involved in activating transcription of Drs. The polypeptide is Protein ref(2)P (ref(2)P) (Drosophila simulans (Fruit fly)).